The primary structure comprises 61 residues: Large ribosomal subunit protein uL30 (61 aa).

This sequence belongs to the universal ribosomal protein uL30 family. In terms of assembly, part of the 50S ribosomal subunit.

The sequence is that of Large ribosomal subunit protein uL30 from Exiguobacterium sibiricum (strain DSM 17290 / CCUG 55495 / CIP 109462 / JCM 13490 / 255-15).